The sequence spans 352 residues: Photosystem II D2 protein (352 aa).

The Cytoplasmic segment spans residues 1–31 (MTIAIGRAPAERGWFDILDDWLKRDRFVFVG). Residues 32-53 (WSGILLFPCAYLALGGWLTGTT) traverse the membrane as a helical segment. Topologically, residues 54 to 108 (FVTSWYTHGLASSYLEGCNFLTVAVSTPANSMGHSLLLLWGPEAQGDFTRWCQLG) are lumenal. Residues 109–131 (GLWTFIALHGAFGLIGFMLRQFE) traverse the membrane as a helical segment. Histidine 117 contributes to the chlorophyll a binding site. Glutamine 129 is a binding site for pheophytin a. The Cytoplasmic portion of the chain corresponds to 132-140 (IARLVGVRP). A helical transmembrane segment spans residues 141-160 (YNAIAFSAPIAVFVSVFLIY). Asparagine 142 serves as a coordination point for pheophytin a. The Lumenal portion of the chain corresponds to 161–193 (PLGQSSWFFAPSFGVAAIFRFLLFFQGFHNWTL). A helical transmembrane segment spans residues 194–217 (NPFHMMGVAGVLGGALLCAIHGAT). Histidine 197 is a chlorophyll a binding site. Residues histidine 214 and phenylalanine 261 each contribute to the a plastoquinone site. Histidine 214 serves as a coordination point for Fe cation. Over 218-265 (VENTLFQDGEGASTFRAFNPTQAEETYSMVTANRFWSQIFGIAFSNKR) the chain is Cytoplasmic. A helical transmembrane segment spans residues 266 to 288 (WLHFFMLFVPVTGLWMSAIGVVG). Histidine 268 lines the Fe cation pocket. Residues 289 to 352 (LALNLRSYDF…EEVLPRGNAL (64 aa)) are Lumenal-facing.

Belongs to the reaction center PufL/M/PsbA/D family. In terms of assembly, PSII is composed of 1 copy each of membrane proteins PsbA, PsbB, PsbC, PsbD, PsbE, PsbF, PsbH, PsbI, PsbJ, PsbK, PsbL, PsbM, PsbT, PsbX, PsbY, PsbZ, Psb30/Ycf12, peripheral proteins PsbO, CyanoQ (PsbQ), PsbU, PsbV and a large number of cofactors. It forms dimeric complexes. Part of a photosystem II (PSII) assembly intermediate complex PSII-I; crystallized from a strain deleted of psbJ, it forms monomeric PSII before addition of the oxygen evolving complex. PSII-I includes 3 assembly factors not found in mature PSII (Psb27, Psb28 and Psb34). Requires The D1/D2 heterodimer binds P680, chlorophylls that are the primary electron donor of PSII, and subsequent electron acceptors. It shares a non-heme iron and each subunit binds pheophytin, quinone, additional chlorophylls, carotenoids and lipids. There is also a Cl(-1) ion associated with D1 and D2, which is required for oxygen evolution. PSII binds additional chlorophylls, carotenoids and specific lipids. as cofactor.

The protein localises to the cellular thylakoid membrane. It catalyses the reaction 2 a plastoquinone + 4 hnu + 2 H2O = 2 a plastoquinol + O2. Its function is as follows. Photosystem II (PSII) is a light-driven water:plastoquinone oxidoreductase that uses light energy to abstract electrons from H(2)O, generating O(2) and a proton gradient subsequently used for ATP formation. It consists of a core antenna complex that captures photons, and an electron transfer chain that converts photonic excitation into a charge separation. The D1/D2 (PsbA/PsbD) reaction center heterodimer binds P680, the primary electron donor of PSII as well as several subsequent electron acceptors. D2 is needed for assembly of a stable PSII complex. In Thermosynechococcus vestitus (strain NIES-2133 / IAM M-273 / BP-1), this protein is Photosystem II D2 protein.